We begin with the raw amino-acid sequence, 293 residues long: Glutamyl-Q tRNA(Asp) synthetase (293 aa).

Residues 9 to 13 (RFAPS) and glutamate 45 each bind L-glutamate. A 'HIGH' region motif is present at residues 12–22 (PSPSGELHFGS). The Zn(2+) site is built by cysteine 101, cysteine 103, tyrosine 115, and cysteine 119. L-glutamate-binding residues include tyrosine 172 and arginine 190. The short motif at 228 to 232 (KLSKQ) is the 'KMSKS' region element. Lysine 231 serves as a coordination point for ATP.

Belongs to the class-I aminoacyl-tRNA synthetase family. GluQ subfamily. Zn(2+) is required as a cofactor.

Functionally, catalyzes the tRNA-independent activation of glutamate in presence of ATP and the subsequent transfer of glutamate onto a tRNA(Asp). Glutamate is transferred on the 2-amino-5-(4,5-dihydroxy-2-cyclopenten-1-yl) moiety of the queuosine in the wobble position of the QUC anticodon. In Klebsiella pneumoniae (strain 342), this protein is Glutamyl-Q tRNA(Asp) synthetase.